Reading from the N-terminus, the 295-residue chain is Caffeine dehydrogenase subunit beta (295 aa).

The FAD-binding PCMH-type domain occupies 1–178 (MKPTAFDYIR…CEIRIPVPSQ (178 aa)). FAD contacts are provided by residues 32 to 36 (AGGQS) and 111 to 115 (TLGGN).

Heterotrimer composed of an alpha (CdhA), a beta (CdhB) and a gamma (CdhC) subunit.

The enzyme catalyses caffeine + a ubiquinone + H2O = 1,3,7-trimethylurate + a ubiquinol. It catalyses the reaction ubiquinone-0 + caffeine + H2O = ubiquinol-0 + 1,3,7-trimethylurate. The catalysed reaction is theobromine + a ubiquinone + H2O = 3,7-dimethylurate + a ubiquinol. Its function is as follows. Component of the caffeine dehydrogenase complex that catalyzes the hydrolytical oxidation of 1,3,7-trimethylxanthine (caffeine) by incorporation of an oxygen atom originating from a water molecule into position C-8 to produce 1,3,7-trimethyluric acid (TMU). Coenzyme Q0 (ubiquinone-0) is the preferred electron acceptor and, to a lesser extent, coenzyme Q2 (ubiquinone-2) can also be used, but oxygen and NAD(P)(+) cannot. Is involved in a caffeine degradation pathway that allows Pseudomonas sp. strain CBB1 to grow on caffeine as the sole carbon and nitrogen source. Is also active with theobromine as substrate, but shows a very poor activity with theophylline and is not active with xanthine, 3-methylxanthine, 7-methylxanthine, TMU, and 3,7-dimethylurate. The polypeptide is Caffeine dehydrogenase subunit beta (Pseudomonas sp. (strain CBB1)).